Consider the following 591-residue polypeptide: DDB1- and CUL4-associated factor 8 (591 aa).

Positions 1–14 (MSSKRPSTDGRRDL) are enriched in basic and acidic residues. Residues 1–140 (MSSKRPSTDG…EDWVSSETTA (140 aa)) are disordered. Serine 21 and serine 22 each carry phosphoserine. The Nuclear export signal signature appears at 39-50 (IEVEASDLSLSL). Composition is skewed to basic and acidic residues over residues 65–99 (RGTD…HGHS) and 118–131 (SRDQ…RALE). A phosphoserine mark is found at serine 99, serine 123, and serine 124. WD repeat units follow at residues 185-224 (GHTG…PVLD), 228-269 (GHKS…CCKN), 275-315 (QHKG…PASK), 323-363 (EKKV…ENEN), 379-418 (ESKA…GAQY), 426-466 (RNNA…IIQF), and 470-509 (DKGG…STEL). Arginine 198 carries the post-translational modification Omega-N-methylarginine; by PRMT1. Positions 552–591 (HRRWREPGVGATDADSDESPSSSDTSDEEEGPDRVQCMPS) are disordered.

It belongs to the WD repeat DCAF8 family. In terms of assembly, interacts with DDB1, CUL4A and CUL4B. Interacts with KPNA1, KPNB1 and XPO1.

It localises to the nucleus. Its subcellular location is the cytoplasm. Its pathway is protein modification; protein ubiquitination. In terms of biological role, may function as a substrate receptor for CUL4-DDB1 E3 ubiquitin-protein ligase complex. The polypeptide is DDB1- and CUL4-associated factor 8 (Dcaf8) (Rattus norvegicus (Rat)).